The following is a 311-amino-acid chain: L-lactate dehydrogenase (311 aa).

NAD(+) contacts are provided by residues valine 12, aspartate 33, lysine 38, tyrosine 63, and 77–78 (GA). Residues glutamine 80 and arginine 86 each coordinate substrate. NAD(+) is bound by residues serine 99, 116-118 (VTN), and serine 141. 118–121 (NPVD) contacts substrate. A substrate-binding site is contributed by 146-149 (DSSR). Beta-D-fructose 1,6-bisphosphate is bound by residues arginine 151 and histidine 166. Histidine 173 acts as the Proton acceptor in catalysis. Tyrosine 219 is subject to Phosphotyrosine. Threonine 228 is a binding site for substrate.

It belongs to the LDH/MDH superfamily. LDH family. In terms of assembly, homotetramer.

It is found in the cytoplasm. It carries out the reaction (S)-lactate + NAD(+) = pyruvate + NADH + H(+). It participates in fermentation; pyruvate fermentation to lactate; (S)-lactate from pyruvate: step 1/1. Allosterically activated by fructose 1,6-bisphosphate (FBP). Its function is as follows. Catalyzes the conversion of lactate to pyruvate. The protein is L-lactate dehydrogenase of Thermoanaerobacterium saccharolyticum (strain DSM 8691 / JW/SL-YS485).